Reading from the N-terminus, the 953-residue chain is uncharacterized protein (953 aa).

A run of 11 helical transmembrane segments spans residues 23–43 (VVTS…AFLI), 103–123 (YLFI…PILL), 148–168 (GRYF…LYII), 392–412 (VSAI…VGMI), 435–455 (LLGL…MSFL), 481–501 (AYFA…SAAT), 540–560 (ISSG…LGAF), 575–595 (LSSM…VITF), 599–619 (IISP…YIAY), 642–662 (LFQT…LFAV), and 666–686 (WGPI…HLHL). Positions 910 to 953 (VPPPYNDVKDEANGEANGEFDTASKENNPFADPKYKEEESRSAV) are disordered. Residues 942 to 953 (PKYKEEESRSAV) show a composition bias toward basic and acidic residues. Ser949 carries the post-translational modification Phosphoserine.

Belongs to the CSC1 (TC 1.A.17) family.

It localises to the membrane. Its function is as follows. Acts as an osmosensitive calcium-permeable cation channel. This is an uncharacterized protein from Saccharomyces cerevisiae (strain ATCC 204508 / S288c) (Baker's yeast).